Here is a 277-residue protein sequence, read N- to C-terminus: Tumor necrosis factor-inducible gene 6 protein (277 aa).

The N-terminal stretch at 1-17 is a signal peptide; sequence MIILIYLFLLLWEDTQG. One can recognise a Link domain in the interval 36–129; it reads GVYHREARSG…SERWDAYCYN (94 aa). Intrachain disulfides connect C58-C127, C82-C103, and C135-C161. N-linked (GlcNAc...) asparagine glycosylation is present at N118. Residues 135 to 247 enclose the CUB domain; the sequence is CGGVFTDPKQ…GGFQIKYVAM (113 aa). E183, D191, D232, S234, and V235 together coordinate Ca(2+). C188 and C210 are oxidised to a cystine. Residue N258 is glycosylated (N-linked (GlcNAc...) asparagine).

As to quaternary structure, interacts (via Link domain) with inter-alpha-inhibitor (I-alpha-I) component bikunin. Interacts with ITIH2/HC2; this interaction is required for transesterification of the HC to hyaluronan. Interacts (via Link and CUB domains) with ITIH1. Chondroitin sulfate may be required for the stability of the complex. Interacts (via Link domain) with various C-X-C and C-C chemokines including PF4, CXCL8, CXCL11, CXCL12, CCL2, CCL7, CCL19, CCL21, and CCL27; this interaction interferes with chemokine binding to glycosaminoglycans. Interacts (primarily via Link domain) with BMP2; this interaction is inhibited by hyaluronan. Interacts (via both Link and CUB domains) with TNFSF11. Interacts (via CUB domain) with FN1 (via type III repeats 9-14); this interaction enhances fibronectin fibril assembly. TNFAIP6 may act as a bridging molecule between FN1 and THBS1. N-glycosylated. As to expression, expressed in airway epithelium and submucosal gland (at protein level). Colocalizes with bikunin at the ciliary border. Present in bronchoalveolar lavage fluid (at protein level). Expressed in mesenchymal stem cells. Found in the synovial fluid of patients with rheumatoid arthritis.

The protein localises to the secreted. Its function is as follows. Major regulator of extracellular matrix organization during tissue remodeling. Catalyzes the transfer of a heavy chain (HC) from inter-alpha-inhibitor (I-alpha-I) complex to hyaluronan. Cleaves the ester bond between the C-terminus of the HC and GalNAc residue of the chondroitin sulfate chain in I-alpha-I complex followed by transesterification of the HC to hyaluronan. In the process, potentiates the antiprotease function of I-alpha-I complex through release of free bikunin. Acts as a catalyst in the formation of hyaluronan-HC oligomers and hyaluronan-rich matrix surrounding the cumulus cell-oocyte complex, a necessary step for oocyte fertilization. Assembles hyaluronan in pericellular matrices that serve as platforms for receptor clustering and signaling. Enables binding of hyaluronan deposited on the surface of macrophages to LYVE1 on lymphatic endothelium and facilitates macrophage extravasation. Alters hyaluronan binding to functionally latent CD44 on vascular endothelium, switching CD44 into an active state that supports leukocyte rolling. Modulates the interaction of chemokines with extracellular matrix components and proteoglycans on endothelial cell surface, likely preventing chemokine gradient formation. In a negative feedback mechanism, may limit excessive neutrophil recruitment at inflammatory sites by antagonizing the association of CXCL8 with glycosaminoglycans on vascular endothelium. Has a role in osteogenesis and bone remodeling. Inhibits BMP2-dependent differentiation of mesenchymal stem cell to osteoblasts. Protects against bone erosion during inflammation by inhibiting TNFSF11/RANKL-dependent osteoclast activation. This Homo sapiens (Human) protein is Tumor necrosis factor-inducible gene 6 protein (TNFAIP6).